The sequence spans 235 residues: Protein Thf1 (235 aa).

Residues 183-204 (DKLNKDLELYRSNLDKMAQALV) adopt a coiled-coil conformation. The tract at residues 213-235 (DRKKREQRKQQSTAPVAPPSSNE) is disordered. Over residues 222–235 (QQSTAPVAPPSSNE) the composition is skewed to polar residues.

This sequence belongs to the THF1 family.

Its function is as follows. May be involved in photosynthetic membrane biogenesis. This Nostoc punctiforme (strain ATCC 29133 / PCC 73102) protein is Protein Thf1.